Reading from the N-terminus, the 459-residue chain is Glycosyl hydrolase family 109 protein 1 (459 aa).

The tat-type signal signal peptide spans 1–31 (MHNIHRRHFLKAAGAVTAGLVTANIALNANA). NAD(+) contacts are provided by residues 64-65 (ER), aspartate 86, 135-138 (WEWH), 155-156 (EV), and asparagine 184. Residues tyrosine 213, arginine 232, 244-247 (YPTH), and tyrosine 326 contribute to the substrate site. Tyrosine 244 contacts NAD(+).

Belongs to the Gfo/Idh/MocA family. Glycosyl hydrolase 109 subfamily. The cofactor is NAD(+). Predicted to be exported by the Tat system. The position of the signal peptide cleavage has not been experimentally proven.

Functionally, glycosidase. The chain is Glycosyl hydrolase family 109 protein 1 from Shewanella sp. (strain ANA-3).